Here is a 442-residue protein sequence, read N- to C-terminus: Probable protein phosphatase 2C 15 (442 aa).

The PPM-type phosphatase domain maps to Ala-35 to Ile-303. Asp-80, Gly-81, Asp-255, and Asp-294 together coordinate Mn(2+). Over residues Lys-420–Ser-434 the composition is skewed to basic and acidic residues. Positions Lys-420–Glu-442 are disordered.

Belongs to the PP2C family. Mg(2+) serves as cofactor. Mn(2+) is required as a cofactor.

The catalysed reaction is O-phospho-L-seryl-[protein] + H2O = L-seryl-[protein] + phosphate. It carries out the reaction O-phospho-L-threonyl-[protein] + H2O = L-threonyl-[protein] + phosphate. This Oryza sativa subsp. japonica (Rice) protein is Probable protein phosphatase 2C 15.